Here is a 130-residue protein sequence, read N- to C-terminus: Holo-[acyl-carrier-protein] synthase (130 aa).

2 residues coordinate Mg(2+): Asp-8 and Glu-62.

It belongs to the P-Pant transferase superfamily. AcpS family. It depends on Mg(2+) as a cofactor.

It is found in the cytoplasm. It carries out the reaction apo-[ACP] + CoA = holo-[ACP] + adenosine 3',5'-bisphosphate + H(+). Transfers the 4'-phosphopantetheine moiety from coenzyme A to a Ser of acyl-carrier-protein. The polypeptide is Holo-[acyl-carrier-protein] synthase (Polynucleobacter asymbioticus (strain DSM 18221 / CIP 109841 / QLW-P1DMWA-1) (Polynucleobacter necessarius subsp. asymbioticus)).